The sequence spans 159 residues: Succinate dehydrogenase [ubiquinone] cytochrome b small subunit, mitochondrial (159 aa).

Residues Met-1–His-56 constitute a mitochondrion transit peptide. Over Ser-57–Ser-63 the chain is Mitochondrial matrix. The helical transmembrane segment at Leu-64–Leu-85 threads the bilayer. Residues Asn-86–Ala-90 lie on the Mitochondrial intermembrane side of the membrane. A helical membrane pass occupies residues Met-91–Val-111. Position 102 (His-102) interacts with heme b. The Mitochondrial matrix portion of the chain corresponds to Thr-112–Lys-122. Tyr-114 contacts a ubiquinone. Residues Ala-123–Tyr-144 form a helical membrane-spanning segment. Topologically, residues His-145 to Leu-159 are mitochondrial intermembrane.

This sequence belongs to the CybS family. Component of complex II composed of four subunits: the flavoprotein (FP) SDHA, iron-sulfur protein (IP) SDHB, and a cytochrome b560 composed of SDHC and SDHD.

The protein localises to the mitochondrion inner membrane. It participates in carbohydrate metabolism; tricarboxylic acid cycle. Functionally, membrane-anchoring subunit of succinate dehydrogenase (SDH) that is involved in complex II of the mitochondrial electron transport chain and is responsible for transferring electrons from succinate to ubiquinone (coenzyme Q). SDH also oxidizes malate to the non-canonical enol form of oxaloacetate, enol-oxaloacetate. Enol-oxaloacetate, which is a potent inhibitor of the succinate dehydrogenase activity, is further isomerized into keto-oxaloacetate. The polypeptide is Succinate dehydrogenase [ubiquinone] cytochrome b small subunit, mitochondrial (SDHD) (Homo sapiens (Human)).